The chain runs to 364 residues: Aminomethyltransferase (364 aa).

Belongs to the GcvT family. As to quaternary structure, the glycine cleavage system is composed of four proteins: P, T, L and H.

The catalysed reaction is N(6)-[(R)-S(8)-aminomethyldihydrolipoyl]-L-lysyl-[protein] + (6S)-5,6,7,8-tetrahydrofolate = N(6)-[(R)-dihydrolipoyl]-L-lysyl-[protein] + (6R)-5,10-methylene-5,6,7,8-tetrahydrofolate + NH4(+). The glycine cleavage system catalyzes the degradation of glycine. In Enterobacter sp. (strain 638), this protein is Aminomethyltransferase.